The following is a 714-amino-acid chain: Fimbrin-3 (714 aa).

Residues 7 to 55 (VIVSDPWLQSQLTQVELRSLNSKFVALKNQSGKVTLEDLPSVLVKVKSL) enclose the EF-hand domain. Calponin-homology (CH) domains are found at residues 124-241 (QSEK…KIQL), 269-372 (LPPE…HERN), 393-499 (CRDE…RTHM), and 514-622 (DMTD…YWSL). Actin-binding stretches follow at residues 124 to 372 (QSEK…HERN) and 393 to 622 (CRDE…YWSL). The span at 628–662 (SSESSSSSSDSSSTHSTTTTCTSTCTSTDASPAPS) shows a compositional bias: low complexity. The segment at 628-694 (SSESSSSSSD…NEVSSLTIEE (67 aa)) is disordered. Residues 670 to 680 (SSLNGEVSSLT) are compositionally biased toward polar residues. Residues 681–694 (IEEDNEVSSLTIEE) are compositionally biased toward acidic residues.

In terms of assembly, interacts with F-actin.

Its subcellular location is the cytoplasm. It is found in the cytoskeleton. Its function is as follows. Cross-links actin filaments (F-actin). Stabilizes and prevents F-actin depolymerization mediated by profilin. May regulate actin cytoarchitecture, cell cycle, cell division, cell elongation and cytoplasmic tractus. This is Fimbrin-3 from Arabidopsis thaliana (Mouse-ear cress).